The chain runs to 553 residues: Transcription factor 7-like 1 (553 aa).

Residues 1–11 (MPQLNSGGGDE) show a composition bias toward gly residues. Positions 1-61 (MPQLNSGGGD…SENHSSDSDS (61 aa)) are interaction with CTNNB1. Disordered stretches follow at residues 1-77 (MPQL…EKPR), 183-213 (GTPPGHLSPEIDPKTGIPRPPHPSELSPYYP), and 392-474 (SARD…LTTK). Basic and acidic residues-rich tracts occupy residues 17–32 (ELIRFKDEGEQEEKSP) and 52–77 (SENHSSDSDSEVERRPPPRETFEKPR). The interval 109 to 312 (LGGHYLPNGA…SPNLITKPSV (204 aa)) is interaction with AES and TLE4. The segment at residues 324-392 (IKKPLNAFML…LHSQLYPTWS (69 aa)) is a DNA-binding region (HMG box). Residues 407–416 (KQSPEMEITK) are compositionally biased toward basic and acidic residues. The segment at 408–553 (QSPEMEITKT…PLSLVTKSSD (146 aa)) is interaction with CTBP. The segment covering 444–463 (SPATPSAALASPAAPAATHS) has biased composition (low complexity). Residues 464–473 (EQAQPLSLTT) show a composition bias toward polar residues.

This sequence belongs to the TCF/LEF family. In terms of assembly, interacts with csnk1e, ctnnb1, ctbp, dact1 and gsk3b. May interact with ase and tle4. Phosphorylated. Phosphorylation by csnk1e promotes binding to ctnnb1 while phosphorylation by gsk3b may reverse this effect.

The protein localises to the nucleus. In terms of biological role, participates in the Wnt signaling pathway. Binds to DNA and acts as a repressor in the absence of ctnnb1, and as an activator in its presence. Required early in development for the establishment of the dorsal body axis in response to maternal Wnt signaling. The chain is Transcription factor 7-like 1 (tcf7l1) from Xenopus tropicalis (Western clawed frog).